The following is a 533-amino-acid chain: MGLFQKCSRLSLRSSYMWSVCPQYSIAVTARETPDRALIVHWTQHRDVHNSRRLGANPANPSAAPPRLPFSRVTQEDLSFFRALLPGRTITDPDLLKSSNVDWLKTVQGSSDVLLRPKTTEGVSQILRYCNERNLAVCPQGGNTGLVGGSVPVFDEIILSTSLMNQVFAFDNISGILTCQAGCVLENLSHYLEERDFIMPLDLGAKGSCHIGGNVSTNAGGLRLLRYGSLRGTVLGLEVVLADGHVLNCLATLRKDNTGYDLKQLFIGSEGTLGVITAVSILCPRKPKAVNVAFLGCSSFQQLLETFQCCRGMLGEILSAFEFLDASCMNLLEKHLKLTNPITECPFYIVIETAGSNATHDEEKLHQFLEEVMTSSLVTDGTVATEATKIKALWSLRERVTEALTHEGYTYKYDISLPVEKIYDLVQDMRRHLGGMAKNVVGYGHVGDGNLHLNITSPSKDFDLLAAIEPYVYEWTSQWKGSISAEHGLGLKKRNYIYYSKPSEAVALMGSIKAMLDPKGILNPYKTLPDNIN.

The transit peptide at 1–55 (MGLFQKCSRLSLRSSYMWSVCPQYSIAVTARETPDRALIVHWTQHRDVHNSRRLG) directs the protein to the mitochondrion. Residues 107-286 (VQGSSDVLLR…TAVSILCPRK (180 aa)) enclose the FAD-binding PCMH-type domain. (R)-2-hydroxyglutarate is bound by residues R397, T401, and K412. R397 is a (R)-lactate binding site. Residues R397, T401, and K412 each contribute to the (R)-malate site. The Zn(2+) site is built by H445 and H452. N454 is a (R)-2-hydroxyglutarate binding site. Residue E486 coordinates Zn(2+). H487 serves as a coordination point for (R)-2-hydroxyglutarate. Residue H487 participates in (R)-lactate binding. H487 serves as a coordination point for (R)-malate.

Belongs to the FAD-binding oxidoreductase/transferase type 4 family. FAD serves as cofactor.

It localises to the mitochondrion. The enzyme catalyses (R)-2-hydroxyglutarate + A = 2-oxoglutarate + AH2. It carries out the reaction (R)-malate + A = oxaloacetate + AH2. Catalyzes the oxidation of D-2-hydroxyglutarate (D-2-HG) to alpha-ketoglutarate. Also catalyzes the oxidation of other D-2-hydroxyacids, such as D-malate (D-MAL) and D-lactate (D-LAC). Exhibits high activities towards D-2-HG and D-MAL but a very weak activity towards D-LAC. This is D-2-hydroxyglutarate dehydrogenase, mitochondrial (d2hgdh) from Danio rerio (Zebrafish).